We begin with the raw amino-acid sequence, 236 residues long: uncharacterized protein (236 aa).

The N-terminal stretch at 1-24 (MRKKHFNMILKLALISSLLALAAS) is a signal peptide. Residues asparagine 59, asparagine 171, and asparagine 197 are each glycosylated (N-linked (GlcNAc...) asparagine).

It is found in the secreted. This is an uncharacterized protein from Caenorhabditis elegans.